Here is a 119-residue protein sequence, read N- to C-terminus: MVLTNSKQPRKQRKALYNAPLHLRNSVMSAMLSKALKEKYGKNALPVKKGDTVKVLRGSFKGIEGEVSKVNYSGYKIIVEGVVNKKQDGKETPYPIHPSNVMITKMEDSDEKRFKTSNK.

Belongs to the universal ribosomal protein uL24 family. In terms of assembly, part of the 50S ribosomal subunit.

Its function is as follows. One of two assembly initiator proteins, it binds directly to the 5'-end of the 23S rRNA, where it nucleates assembly of the 50S subunit. In terms of biological role, located at the polypeptide exit tunnel on the outside of the subunit. The polypeptide is Large ribosomal subunit protein uL24 (Methanococcus vannielii).